The chain runs to 134 residues: Alkaline proteinase inhibitor (134 aa).

The signal sequence occupies residues 1–26; sequence MVFAAWYLKFAFFVALAFSIIGGSMA. Cysteine 50 and cysteine 73 are disulfide-bonded.

This sequence belongs to the protease inhibitor I38 family.

The protein resides in the periplasm. Functionally, inhibitor of the alkaline protease. In Photorhabdus luminescens (Xenorhabdus luminescens), this protein is Alkaline proteinase inhibitor (inh).